Consider the following 494-residue polypeptide: MSGEATVLAYHAPEEQEGLLVVKVEEENYVLDQDFGLQENPWSQEVFRQKFRQFSYSDSTGPREALSRLRELCCQWLRPEVHSKEQILELLMLEQFLAILPEELQAWLREHRPENGEEAVTMLEELEKELEEPRQQDTTHGQEMFWQEMTSTGALKSLSLNSPVQPLENQCKTETQESQAFQERDGRMVAGKVLMAKQEIVECVASAAMISPGKLPGETHSQRIAEEALGGLDNSKKQKGNAAGNKISQLPSQDRHFSLATFNRRIPTEHSVLESHESEGSFSMNSNDITQQSVDTREKLYECFDCGKAFCQSSKLIRHQRIHTGERPYACKECGKAFSLSSDLVRHQRIHSGEKPYECCECGKAFRGSSELIRHRRIHTGEKPYECGECGKAFSRSSALIQHKKIHTGDKSYECIACGKAFGRSSILIEHQRIHTGEKPYECNECGKSFNQSSALTQHQRIHTGEKPYECSECRKTFRHRSGLMQHQRTHTRV.

Positions 48–130 constitute an SCAN box domain; it reads RQKFRQFSYS…TMLEELEKEL (83 aa). Lys-197 is covalently cross-linked (Glycyl lysine isopeptide (Lys-Gly) (interchain with G-Cter in SUMO2)). 7 consecutive C2H2-type zinc fingers follow at residues 301–323, 329–351, 357–379, 385–407, 413–435, 441–463, and 469–491; these read YECF…QRIH, YACK…QRIH, YECC…RRIH, YECG…KKIH, YECI…QRIH, YECN…QRIH, and YECS…QRTH.

This sequence belongs to the krueppel C2H2-type zinc-finger protein family.

It localises to the nucleus. Functionally, may be involved in transcriptional regulation. In Homo sapiens (Human), this protein is Zinc finger and SCAN domain-containing protein 30 (ZSCAN30).